Here is a 1247-residue protein sequence, read N- to C-terminus: Catenin delta-2 (1247 aa).

Disordered regions lie at residues 1–50 (MFAR…TTSA), 134–238 (SGIL…SAFH), and 256–309 (LPAP…KSYS). The residue at position 7 (S7) is a Phosphoserine. Residues 22–50 (PSASEKNSSLSPGLNTSNGDGSETETTSA) are compositionally biased toward polar residues. Residues 49–84 (SAILASVKEQELQFERLTRELEAERQIVASQLERCK) are a coiled coil. The segment covering 149 to 160 (SLLSQSALQLNS) has biased composition (low complexity). Positions 172–207 (YHSNQTLALGDTAPSQLPARSTQARAAGQSFSQGTT) are enriched in polar residues. R209 bears the Omega-N-methylarginine mark. Over residues 218–228 (PAPPPPPPREP) the composition is skewed to pro residues. At R261 the chain carries Omega-N-methylarginine. Phosphoserine is present on residues S264 and S273. Polar residues predominate over residues 265-276 (PLTTTQGGSPTK). Omega-N-methylarginine occurs at positions 279 and 293. The span at 296–309 (SPKQSPSRLAKSYS) shows a compositional bias: polar residues. S324, S357, S412, and S458 each carry phosphoserine. An ARM 1 repeat occupies 391–433 (GSRASYSSQHGHLAPELRALQSPEHHIDPIYEDRVYQKPPMRS). Residues 429–480 (PPMRSLSQSQGDPLPPAHTGTFRTSTAPSSPGVDSVPLQRTGSQHGPQNAAA) form a disordered region. Polar residues predominate over residues 466–475 (LQRTGSQHGP). Position 511 is a phosphoserine (S511). Y513 is modified (phosphotyrosine). The segment at 514–533 (SKSGPALPPEGTLARSPSID) is disordered. 8 ARM repeats span residues 537-576 (KDPR…HLCF), 579-618 (NKIK…NLVY), 623-663 (DDNK…NLSS), 679-721 (LTNA…NVSS), 725-770 (EARR…NLSY), 832-872 (PKGI…NLAA), 904-943 (VYIR…NMAL), and 997-1040 (MENA…SMWQ). Disordered stretches follow at residues 1064-1131 (TIER…HTSR) and 1152-1176 (APAE…RKDY). Positions 1072–1081 (PYSSSRTPSI) are enriched in polar residues. S1087 and S1098 each carry phosphoserine. Positions 1087-1100 (SPNNRSASAPASPR) are enriched in low complexity. Residues 1103 to 1112 (ISLKERKTDY) show a composition bias toward basic and acidic residues.

It belongs to the beta-catenin family. Binds to E-cadherin at a juxtamembrane site within the cytoplasmic domain. Binds to PSEN1. Interacts with PDZD2. Interacts (via the extreme C-terminus) with FRMPD2 (via the PDZ 2 domain). Interacts with ZBTB33. Interacts with ARHGEF28. Interacts with CDK5. Interacts with CTNNB1. Interacts with GSK3A and GSK3B. Interacts with DNM2. Interacts with CCDC85B. Post-translationally, O-glycosylated. Phosphorylated by CDK5. Phosphorylated by GSK3B. As to expression, expressed in neurons and glial cells. Isoform 2 was found to be the most predominant isoform in various brain regions. Expressed at neuromuscular junctions.

The protein resides in the nucleus. It is found in the cell junction. Its subcellular location is the adherens junction. It localises to the cell projection. The protein localises to the dendrite. The protein resides in the perikaryon. Functionally, has a critical role in neuronal development, particularly in the formation and/or maintenance of dendritic spines and synapses. Involved in the regulation of canonical Wnt signaling. It probably acts on beta-catenin turnover, facilitating beta-catenin interaction with GSK3B, phosphorylation, ubiquitination and degradation. May be involved in neuronal cell adhesion and tissue morphogenesis and integrity by regulating adhesion molecules. Functions as a transcriptional activator when bound to ZBTB33. In Mus musculus (Mouse), this protein is Catenin delta-2 (Ctnnd2).